We begin with the raw amino-acid sequence, 325 residues long: Lactonase drp35 (325 aa).

Glu-46, Thr-108, Gly-110, Asp-128, Thr-131, Tyr-133, Asp-136, Asn-183, Asp-234, and Ser-235 together coordinate Ca(2+). The active-site Proton donor is the Asp-234.

The protein belongs to the SMP-30/CGR1 family. The cofactor is Ca(2+).

It is found in the cytoplasm. In terms of biological role, exhibits lactonase activity. Acts in cells with perturbed membrane integrity and is possibly related to the membrane homeostasis. The polypeptide is Lactonase drp35 (drp35) (Staphylococcus epidermidis (strain ATCC 12228 / FDA PCI 1200)).